We begin with the raw amino-acid sequence, 498 residues long: MRMNPTTSGSGVTTLDKKTLGRIAQIIGPVLDVAFPPGKMPNIYNALVVKGRDTAGQPINVTCEVQQLLGNNRVRAVAMSATDGLTRGMDVIDTGAPLSVPVGGATLGRIFNVLGEPVDNLGPVDTSTTFPIHRSAPAFIQLDTKLSIFETGIKVVDLLAPYRRGGKIGLFGGAGVGKTVLIMELINNIAKAHGGVSVFGGVGERTREGNDLYMEMKESGVINEKNIPESKVALVYGQMNEPPGARMRVGLTALTMAEYFRDVNEQDVLLFIDNIFRFVQAGSEVSALLGRMPSAVGYQPTLSTEMGSLQERITSTKEGSITSIQAVYVPADDLTDPAPATTFAHLDATTVLSRGLAAKGIYPAVDPLDSTSTMLQPRIVGEEHYDTAQEVKQTLQRYKELQDIIAILGLDELSEEDRLTVARARKIERFLSQPFFVAEVFTGSPGKYVGLAETIRGFQLILSGELDGLPEQAFYLVGNIDEATAKAMNLEMESNLKK.

172-179 contacts ATP; sequence GGAGVGKT.

The protein belongs to the ATPase alpha/beta chains family. As to quaternary structure, F-type ATPases have 2 components, CF(1) - the catalytic core - and CF(0) - the membrane proton channel. CF(1) has five subunits: alpha(3), beta(3), gamma(1), delta(1), epsilon(1). CF(0) has four main subunits: a(1), b(1), b'(1) and c(9-12).

It localises to the plastid. Its subcellular location is the chloroplast thylakoid membrane. The catalysed reaction is ATP + H2O + 4 H(+)(in) = ADP + phosphate + 5 H(+)(out). Its function is as follows. Produces ATP from ADP in the presence of a proton gradient across the membrane. The catalytic sites are hosted primarily by the beta subunits. The protein is ATP synthase subunit beta, chloroplastic of Lactuca sativa (Garden lettuce).